The primary structure comprises 131 residues: ATP synthase epsilon chain (131 aa).

It belongs to the ATPase epsilon chain family. In terms of assembly, F-type ATPases have 2 components, CF(1) - the catalytic core - and CF(0) - the membrane proton channel. CF(1) has five subunits: alpha(3), beta(3), gamma(1), delta(1), epsilon(1). CF(0) has three main subunits: a, b and c.

The protein localises to the cell inner membrane. Its function is as follows. Produces ATP from ADP in the presence of a proton gradient across the membrane. The polypeptide is ATP synthase epsilon chain (Helicobacter hepaticus (strain ATCC 51449 / 3B1)).